We begin with the raw amino-acid sequence, 783 residues long: Cyclic di-GMP phosphodiesterase NbdA (783 aa).

One can recognise an MHYT domain in the interval Tyr81 to Ser274. 7 consecutive transmembrane segments (helical) span residues Ser84 to Val104, Ile120 to Phe140, Leu150 to Met170, Phe176 to His196, Leu215 to Pro235, Leu255 to Val275, and Leu292 to Trp312. Residues Ser313–Ala783 lie on the Cytoplasmic side of the membrane. In terms of domain architecture, GGDEF spans Lys375–Arg507. Residues Glu516 to Arg770 enclose the EAL domain. 3',3'-c-di-GMP is bound by residues Gln537, Glu551, Arg555, Asn610, and Asn615. Glu551 contacts Mg(2+). A Mg(2+)-binding site is contributed by Asn610. Mg(2+) contacts are provided by Glu642, Asp672, and Asp673. Asp672 contributes to the 3',3'-c-di-GMP binding site. Arg696 provides a ligand contact to 3',3'-c-di-GMP. Glu729 is a Mg(2+) binding site. Positions 732 and 751 each coordinate 3',3'-c-di-GMP.

The cofactor is Mg(2+).

The protein resides in the cell inner membrane. The enzyme catalyses 3',3'-c-di-GMP + H2O = 5'-phosphoguanylyl(3'-&gt;5')guanosine + H(+). With respect to regulation, PDE activity is stimulated by GTP. It could also be stimulated by NO. Its function is as follows. Displays c-di-GMP-specific phosphodiesterase (PDE) activity. Seems to play a specific role in nitric oxide (NO)-induced biofilm dispersion. Enhanced NbdA synthesis in the presence of NO increases PDE activity, leading to reduced cellular c-di-GMP levels and biofilm dispersion. Does not show diguanylate cyclase (DGC) activity. This Pseudomonas aeruginosa (strain ATCC 15692 / DSM 22644 / CIP 104116 / JCM 14847 / LMG 12228 / 1C / PRS 101 / PAO1) protein is Cyclic di-GMP phosphodiesterase NbdA.